The following is a 351-amino-acid chain: Dihydroorotate dehydrogenase (quinone) (351 aa).

Residues 67 to 71 (AGFDK) and threonine 91 each bind FMN. Residue lysine 71 coordinates substrate. A substrate-binding site is contributed by 116 to 120 (NAMGF). FMN is bound by residues asparagine 145 and asparagine 178. Asparagine 178 is a binding site for substrate. Serine 181 functions as the Nucleophile in the catalytic mechanism. A substrate-binding site is contributed by asparagine 183. FMN is bound by residues lysine 214 and threonine 242. A substrate-binding site is contributed by 243–244 (NT). FMN contacts are provided by residues glycine 262, glycine 291, and 312 to 313 (YS).

It belongs to the dihydroorotate dehydrogenase family. Type 2 subfamily. Monomer. It depends on FMN as a cofactor.

Its subcellular location is the cell membrane. The catalysed reaction is (S)-dihydroorotate + a quinone = orotate + a quinol. The protein operates within pyrimidine metabolism; UMP biosynthesis via de novo pathway; orotate from (S)-dihydroorotate (quinone route): step 1/1. Catalyzes the conversion of dihydroorotate to orotate with quinone as electron acceptor. The polypeptide is Dihydroorotate dehydrogenase (quinone) (Helicobacter pylori (strain HPAG1)).